The chain runs to 559 residues: Proline--tRNA ligase (559 aa).

Belongs to the class-II aminoacyl-tRNA synthetase family. ProS type 1 subfamily. In terms of assembly, homodimer.

It localises to the cytoplasm. It catalyses the reaction tRNA(Pro) + L-proline + ATP = L-prolyl-tRNA(Pro) + AMP + diphosphate. Its function is as follows. Catalyzes the attachment of proline to tRNA(Pro) in a two-step reaction: proline is first activated by ATP to form Pro-AMP and then transferred to the acceptor end of tRNA(Pro). As ProRS can inadvertently accommodate and process non-cognate amino acids such as alanine and cysteine, to avoid such errors it has two additional distinct editing activities against alanine. One activity is designated as 'pretransfer' editing and involves the tRNA(Pro)-independent hydrolysis of activated Ala-AMP. The other activity is designated 'posttransfer' editing and involves deacylation of mischarged Ala-tRNA(Pro). The misacylated Cys-tRNA(Pro) is not edited by ProRS. This chain is Proline--tRNA ligase, found in Ruthia magnifica subsp. Calyptogena magnifica.